The following is a 325-amino-acid chain: LIM and senescent cell antigen-like-containing domain protein 1 (325 aa).

Residue alanine 2 is modified to N-acetylalanine. 5 consecutive LIM zinc-binding domains span residues cysteine 10–aspartate 62, cysteine 71–cysteine 121, cysteine 135–cysteine 184, cysteine 193–histidine 243, and cysteine 252–cysteine 303.

Component of the heterotrimeric IPP (ILK-PINCH-PARVIN) complex composed of ILK, LIMS1/PINCH and PARVA; the complex binds to F-actin via the C-terminal tail of LIMS1 and the N-terminal region of PARVA, promoting F-actin filament bundling. Formation of the IPP complex is dependent on protein kinase C and precedes integrin-mediated cell adhesion and spreading. Competes with LIMS2 for interaction with ILK. Interacts with SH3/SH2 adapter NCK2, thereby linking the complex to cell surface receptors. Interacts (via LIM zinc-binding 5) with TGFB1I1.

It is found in the cell junction. The protein localises to the focal adhesion. Its subcellular location is the cell membrane. Within the IPP (ILK-PINCH-PARVIN) complex, binds to F-actin, promoting F-actin bundling, a process required to generate force for actin cytoskeleton reorganization and subsequent dynamic cell adhesion events such as cell spreading and migration. The polypeptide is LIM and senescent cell antigen-like-containing domain protein 1 (Lims1) (Mus musculus (Mouse)).